A 314-amino-acid polypeptide reads, in one-letter code: Transcription factor DICHOTOMA (314 aa).

The 59-residue stretch at 87–145 (KKDRHSKINRPQGPRDRRVRLSIGIARKFFDLQEMLGFDKPSKTLDWLLTKSKEAIKEL) folds into the TCP domain. The R domain maps to 201–218 (KESRAKARARARERTKEK).

It is found in the nucleus. Functionally, transcription regulator involved in the dorsovental asymmetry of flowers. Promotes dorsal identity. The sequence is that of Transcription factor DICHOTOMA (DICH) from Antirrhinum majus (Garden snapdragon).